The following is a 199-amino-acid chain: Large ribosomal subunit protein uL10 (199 aa).

This sequence belongs to the universal ribosomal protein uL10 family. As to quaternary structure, part of the ribosomal stalk of the 50S ribosomal subunit. The N-terminus interacts with L11 and the large rRNA to form the base of the stalk. The C-terminus forms an elongated spine to which L12 dimers bind in a sequential fashion forming a multimeric L10(L12)X complex.

Its function is as follows. Forms part of the ribosomal stalk, playing a central role in the interaction of the ribosome with GTP-bound translation factors. In Aquifex aeolicus (strain VF5), this protein is Large ribosomal subunit protein uL10 (rplJ).